The sequence spans 107 residues: U1-lycotoxin-Ls1p (107 aa).

The N-terminal stretch at 1 to 20 (MMKVLVVVALLVTLISYSSS) is a signal peptide. Positions 21-41 (EGIDDLEADELLSLMANEQTR) are excised as a propeptide. Intrachain disulfides connect Cys-44–Cys-59, Cys-51–Cys-68, Cys-58–Cys-86, and Cys-70–Cys-84.

It belongs to the neurotoxin 19 (CSTX) family. 04 (U1-Lctx) subfamily. In terms of tissue distribution, expressed by the venom gland.

The protein localises to the secreted. In Lycosa singoriensis (Wolf spider), this protein is U1-lycotoxin-Ls1p.